Consider the following 465-residue polypeptide: UDP-N-acetylmuramate--L-alanine ligase (465 aa).

112-118 (GTHGKTT) provides a ligand contact to ATP.

Belongs to the MurCDEF family.

It is found in the cytoplasm. The catalysed reaction is UDP-N-acetyl-alpha-D-muramate + L-alanine + ATP = UDP-N-acetyl-alpha-D-muramoyl-L-alanine + ADP + phosphate + H(+). The protein operates within cell wall biogenesis; peptidoglycan biosynthesis. Functionally, cell wall formation. In Burkholderia orbicola (strain MC0-3), this protein is UDP-N-acetylmuramate--L-alanine ligase.